Here is a 1419-residue protein sequence, read N- to C-terminus: Myosin-2B (1419 aa).

One can recognise a Myosin N-terminal SH3-like domain in the interval 4-57 (EVGTRCWYPNSEAGWIGCEVTKNDFQDGTYHIELTSETGLVIPIETKHLESNNA). The 706-residue stretch at 75–780 (EATHDLTTLS…VLAYLEKIRS (706 aa)) folds into the Myosin motor domain. Residue 169–176 (GESGAGKT) coordinates ATP. The segment at 451-531 (FIGVLDIYGF…LGILSLLDEE (81 aa)) is actin-binding. 6 consecutive IQ domains span residues 783-805 (VTELAVLIQKHIRAKYYRSLYLQ), 806-830 (AMLSIKNCQSLIRGVQSRQRVDFEM), 831-854 (KTDAATLLQTLHRSTRVRSQVFET), 855-878 (LKNILEVQTAIRRVLVSNFIQREF), 879-901 (ESRSAIMIQSKIRANSPKHRYQT), and 902-931 (LKTGTILIQALVRRKQSQEKLKQLKIQAES). Residues 909–940 (IQALVRRKQSQEKLKQLKIQAESAASLKNSAA) adopt a coiled-coil conformation. Residues 1061 to 1419 (KDNERTSTSS…VIKELGSLLA (359 aa)) are non alpha-helical, tail domain. In terms of domain architecture, Dilute spans 1143–1357 (HSILKQTVQD…LNHLSNTARR (215 aa)).

It belongs to the TRAFAC class myosin-kinesin ATPase superfamily. Myosin family. As to quaternary structure, homodimer. Interacts with calmodulin (CMD1) and the myosin light chain MLC1 through its IQ repeats.

Myosin heavy chain that is required for the cell cycle-regulated transport of various organelles and proteins for their segregation. Functions by binding with its tail domain to receptor proteins on organelles and exerting force with its N-terminal motor domain against actin filaments, thereby transporting its cargo along polarized actin cables. The protein is Myosin-2B (MYO2B) of Naumovozyma castellii (Yeast).